The chain runs to 181 residues: Large ribosomal subunit protein uL6 (181 aa).

Belongs to the universal ribosomal protein uL6 family. Part of the 50S ribosomal subunit.

Its function is as follows. This protein binds to the 23S rRNA, and is important in its secondary structure. It is located near the subunit interface in the base of the L7/L12 stalk, and near the tRNA binding site of the peptidyltransferase center. The protein is Large ribosomal subunit protein uL6 of Synechococcus sp. (strain JA-2-3B'a(2-13)) (Cyanobacteria bacterium Yellowstone B-Prime).